The chain runs to 1008 residues: Pre-mRNA-splicing factor SNU114 (1008 aa).

S85 carries the phosphoserine modification. T88 carries the phosphothreonine modification. Residues E131 to S338 form the tr-type G domain. Residues G140 to T147 are G1. G140 to T147 contacts GTP. The segment at G188–K192 is G2. The segment at D214–G217 is G3. GTP contacts are provided by residues D214–H218 and N268–D271. The tract at residues N268–D271 is G4. The tract at residues S315–K317 is G5. A disordered region spans residues T504–S536. The segment covering S509–K520 has biased composition (basic and acidic residues). Over residues S524–S536 the composition is skewed to acidic residues.

This sequence belongs to the TRAFAC class translation factor GTPase superfamily. Classic translation factor GTPase family. EF-G/EF-2 subfamily. Belongs to the CWC complex (or CEF1-associated complex), a spliceosome sub-complex reminiscent of a late-stage spliceosome composed of the U2, U5 and U6 snRNAs and at least BUD13, BUD31, BRR2, CDC40, CEF1, CLF1, CUS1, CWC2, CWC15, CWC21, CWC22, CWC23, CWC24, CWC25, CWC27, ECM2, HSH155, IST3, ISY1, LEA1, MSL1, NTC20, PRP8, PRP9, PRP11, PRP19, PRP21, PRP22, PRP45, PRP46, SLU7, SMB1, SMD1, SMD2, SMD3, SMX2, SMX3, SNT309, SNU114, SPP2, SYF1, SYF2, RSE1 and YJU2. Component of the U4/U6-U5 tri-snRNP complex composed of the U4, U6 and U5 snRNAs and at least PRP3, PRP4, PRP6, PRP8, PRP18, PRP31, PRP38, SNU13, SNU23, SNU66, SNU114, SPP381, SMB1, SMD1, SMD2, SMD3, SMX2, SMX3, LSM2, LSM3, LSM4, LSM5, LSM6, LSM7, LSM8, BRR2 and DIB1. Interacts (via C-terminus) with CWC21. Interacts (via N-terminus) with PRP8 (via SCwid domain).

Its subcellular location is the nucleus. Functionally, component of the U5 snRNP complex required for pre-mRNA splicing. Binds GTP. The protein is Pre-mRNA-splicing factor SNU114 (SNU114) of Saccharomyces cerevisiae (strain ATCC 204508 / S288c) (Baker's yeast).